A 400-amino-acid polypeptide reads, in one-letter code: CCA-adding enzyme (400 aa).

ATP is bound by residues Gly-28 and Arg-31. Positions 28 and 31 each coordinate CTP. The Mg(2+) site is built by Asp-41 and Asp-43. 5 residues coordinate ATP: Arg-112, Asp-155, Arg-158, Arg-161, and Arg-164. Positions 112, 155, 158, 161, and 164 each coordinate CTP.

The protein belongs to the tRNA nucleotidyltransferase/poly(A) polymerase family. Bacterial CCA-adding enzyme type 3 subfamily. As to quaternary structure, homodimer. It depends on Mg(2+) as a cofactor.

The enzyme catalyses a tRNA precursor + 2 CTP + ATP = a tRNA with a 3' CCA end + 3 diphosphate. It carries out the reaction a tRNA with a 3' CCA end + 2 CTP + ATP = a tRNA with a 3' CCACCA end + 3 diphosphate. In terms of biological role, catalyzes the addition and repair of the essential 3'-terminal CCA sequence in tRNAs without using a nucleic acid template. Adds these three nucleotides in the order of C, C, and A to the tRNA nucleotide-73, using CTP and ATP as substrates and producing inorganic pyrophosphate. tRNA 3'-terminal CCA addition is required both for tRNA processing and repair. Also involved in tRNA surveillance by mediating tandem CCA addition to generate a CCACCA at the 3' terminus of unstable tRNAs. While stable tRNAs receive only 3'-terminal CCA, unstable tRNAs are marked with CCACCA and rapidly degraded. This is CCA-adding enzyme from Oceanobacillus iheyensis (strain DSM 14371 / CIP 107618 / JCM 11309 / KCTC 3954 / HTE831).